A 561-amino-acid chain; its full sequence is Oxygen-dependent choline dehydrogenase (561 aa).

7 to 36 contacts FAD; that stretch reads DYIIVGAGSAGNVLASRLTEDADVTVLLLE. The active-site Proton acceptor is His474.

This sequence belongs to the GMC oxidoreductase family. It depends on FAD as a cofactor.

It carries out the reaction choline + A = betaine aldehyde + AH2. It catalyses the reaction betaine aldehyde + NAD(+) + H2O = glycine betaine + NADH + 2 H(+). Its pathway is amine and polyamine biosynthesis; betaine biosynthesis via choline pathway; betaine aldehyde from choline (cytochrome c reductase route): step 1/1. In terms of biological role, involved in the biosynthesis of the osmoprotectant glycine betaine. Catalyzes the oxidation of choline to betaine aldehyde and betaine aldehyde to glycine betaine at the same rate. In Paraburkholderia phytofirmans (strain DSM 17436 / LMG 22146 / PsJN) (Burkholderia phytofirmans), this protein is Oxygen-dependent choline dehydrogenase.